We begin with the raw amino-acid sequence, 366 residues long: Histidinol-phosphate aminotransferase 2 (366 aa).

Position 226 is an N6-(pyridoxal phosphate)lysine (Lys226).

This sequence belongs to the class-II pyridoxal-phosphate-dependent aminotransferase family. Histidinol-phosphate aminotransferase subfamily. As to quaternary structure, homodimer. It depends on pyridoxal 5'-phosphate as a cofactor.

The catalysed reaction is L-histidinol phosphate + 2-oxoglutarate = 3-(imidazol-4-yl)-2-oxopropyl phosphate + L-glutamate. It participates in amino-acid biosynthesis; L-histidine biosynthesis; L-histidine from 5-phospho-alpha-D-ribose 1-diphosphate: step 7/9. The sequence is that of Histidinol-phosphate aminotransferase 2 (hisC2) from Haemophilus influenzae (strain ATCC 51907 / DSM 11121 / KW20 / Rd).